The primary structure comprises 310 residues: Thioredoxin reductase (310 aa).

FAD is bound at residue 35–42 (ERGMPGGQ). Cys-134 and Cys-137 form a disulfide bridge. Residue 277–286 (DVRDKGLRQI) participates in FAD binding.

It belongs to the class-II pyridine nucleotide-disulfide oxidoreductase family. Homodimer. Requires FAD as cofactor.

Its subcellular location is the cytoplasm. It carries out the reaction [thioredoxin]-dithiol + NADP(+) = [thioredoxin]-disulfide + NADPH + H(+). This is Thioredoxin reductase (trxB) from Staphylococcus epidermidis (strain ATCC 35984 / DSM 28319 / BCRC 17069 / CCUG 31568 / BM 3577 / RP62A).